We begin with the raw amino-acid sequence, 500 residues long: NAD(P)H-quinone oxidoreductase chain 4, chloroplastic (500 aa).

14 helical membrane-spanning segments follow: residues 4–24, 37–57, 87–107, 111–131, 134–154, 167–187, 208–228, 242–262, 272–292, 305–325, 330–350, 386–406, 416–436, and 462–482; these read FPWL…IFLL, LCIC…HFQL, IGPI…AWPV, AQLF…SFSS, LLLF…LLSM, FILY…GIGL, ALEV…LPII, HYST…YGLV, AHCL…IYAA, IAYS…SLSD, GAIL…FLAG, LALP…GIIT, ILIA…SLSM, and LFVS…PDFV.

It belongs to the complex I subunit 4 family.

The protein localises to the plastid. The protein resides in the chloroplast thylakoid membrane. The catalysed reaction is a plastoquinone + NADH + (n+1) H(+)(in) = a plastoquinol + NAD(+) + n H(+)(out). It carries out the reaction a plastoquinone + NADPH + (n+1) H(+)(in) = a plastoquinol + NADP(+) + n H(+)(out). This chain is NAD(P)H-quinone oxidoreductase chain 4, chloroplastic, found in Oenothera biennis (German evening primrose).